Here is a 358-residue protein sequence, read N- to C-terminus: UDP-N-acetylglucosamine--N-acetylmuramyl-(pentapeptide) pyrophosphoryl-undecaprenol N-acetylglucosamine transferase (358 aa).

Residues 13 to 15 (TGG), N125, R162, S190, I244, 263 to 268 (ALTVAE), and Q289 contribute to the UDP-N-acetyl-alpha-D-glucosamine site.

It belongs to the glycosyltransferase 28 family. MurG subfamily.

The protein localises to the cell inner membrane. The enzyme catalyses di-trans,octa-cis-undecaprenyl diphospho-N-acetyl-alpha-D-muramoyl-L-alanyl-D-glutamyl-meso-2,6-diaminopimeloyl-D-alanyl-D-alanine + UDP-N-acetyl-alpha-D-glucosamine = di-trans,octa-cis-undecaprenyl diphospho-[N-acetyl-alpha-D-glucosaminyl-(1-&gt;4)]-N-acetyl-alpha-D-muramoyl-L-alanyl-D-glutamyl-meso-2,6-diaminopimeloyl-D-alanyl-D-alanine + UDP + H(+). It functions in the pathway cell wall biogenesis; peptidoglycan biosynthesis. Cell wall formation. Catalyzes the transfer of a GlcNAc subunit on undecaprenyl-pyrophosphoryl-MurNAc-pentapeptide (lipid intermediate I) to form undecaprenyl-pyrophosphoryl-MurNAc-(pentapeptide)GlcNAc (lipid intermediate II). The polypeptide is UDP-N-acetylglucosamine--N-acetylmuramyl-(pentapeptide) pyrophosphoryl-undecaprenol N-acetylglucosamine transferase (Halorhodospira halophila (strain DSM 244 / SL1) (Ectothiorhodospira halophila (strain DSM 244 / SL1))).